Consider the following 145-residue polypeptide: Aminoglycoside N(6')-acetyltransferase type 1 (145 aa).

Positions methionine 1 to cysteine 145 constitute an N-acetyltransferase domain. Substrate-binding residues include tryptophan 22, histidine 25, tyrosine 66, and glutamate 79. Residues isoleucine 81–valine 83 and glutamine 89–lysine 94 each bind acetyl-CoA. Aspartate 115 provides a ligand contact to substrate. Asparagine 120 is an acetyl-CoA binding site. Residue glutamate 136 coordinates substrate.

In terms of assembly, homodimer.

It carries out the reaction kanamycin B + acetyl-CoA = N(6')-acetylkanamycin B + CoA + H(+). In terms of biological role, catalyzes the transfer of an acetyl group from acetyl-CoA to the 6'-amino group of aminoglycoside molecules conferring resistance to antibiotics containing the purpurosamine ring. This chain is Aminoglycoside N(6')-acetyltransferase type 1, found in Salmonella typhimurium (strain LT2 / SGSC1412 / ATCC 700720).